A 293-amino-acid chain; its full sequence is Ribosomal protein L11 methyltransferase (293 aa).

S-adenosyl-L-methionine is bound by residues threonine 145, glycine 166, aspartate 188, and asparagine 230.

It belongs to the methyltransferase superfamily. PrmA family.

Its subcellular location is the cytoplasm. The catalysed reaction is L-lysyl-[protein] + 3 S-adenosyl-L-methionine = N(6),N(6),N(6)-trimethyl-L-lysyl-[protein] + 3 S-adenosyl-L-homocysteine + 3 H(+). Methylates ribosomal protein L11. The sequence is that of Ribosomal protein L11 methyltransferase from Shewanella piezotolerans (strain WP3 / JCM 13877).